A 121-amino-acid polypeptide reads, in one-letter code: Large ribosomal subunit protein bL12 (121 aa).

The protein belongs to the bacterial ribosomal protein bL12 family. In terms of assembly, homodimer. Part of the ribosomal stalk of the 50S ribosomal subunit. Forms a multimeric L10(L12)X complex, where L10 forms an elongated spine to which 2 to 4 L12 dimers bind in a sequential fashion. Binds GTP-bound translation factors.

Forms part of the ribosomal stalk which helps the ribosome interact with GTP-bound translation factors. Is thus essential for accurate translation. The protein is Large ribosomal subunit protein bL12 of Lactococcus lactis subsp. lactis (strain IL1403) (Streptococcus lactis).